A 219-amino-acid chain; its full sequence is Envelope protein US9 homolog (219 aa).

Residues 1 to 193 (MEKAEAAAVV…RHRRRRVALT (193 aa)) are Intravirion-facing. The Di-leucine internalization motif motif lies at 145 to 146 (LL). Residues 153 to 168 (DYDSESGCYYSESDNE) form an acidic region. Residues Ser-163 and Ser-165 each carry the phosphoserine; by host CK2 modification. A helical; Signal-anchor for type II membrane protein membrane pass occupies residues 194–214 (VAGVILVVVLCAISGIVGAFL). At 215 to 219 (ARVFP) the chain is on the virion surface side.

The protein belongs to the alphaherpesvirinae envelope protein US9 family. Phosphorylated on serines within the acidic cluster. Phosphorylation determines whether endocytosed viral US9 traffics to the trans-Golgi network or recycles to the cell membrane.

Its subcellular location is the virion membrane. The protein localises to the host Golgi apparatus membrane. The protein resides in the host smooth endoplasmic reticulum membrane. It localises to the host cell membrane. Essential for the anterograde spread of the infection throughout the host nervous system. Together with the gE/gI heterodimer, US9 is involved in the sorting and transport of viral structural components toward axon tips. The polypeptide is Envelope protein US9 homolog (Equine herpesvirus 1 (strain Kentucky A) (EHV-1)).